A 628-amino-acid chain; its full sequence is ATP-binding cassette sub-family F member 2 (628 aa).

The tract at residues Met1–Glu57 is disordered. The span at Ala40–Thr53 shows a compositional bias: basic and acidic residues. ABC transporter domains follow at residues Val91–Met330 and Ile401–Glu618. Position 123–130 (Gly123–Ser130) interacts with ATP. Thr223 carries the post-translational modification Phosphothreonine. Lys309 is subject to N6-acetyllysine. Gly435 to Ser442 provides a ligand contact to ATP. Ser517 is modified (phosphoserine).

The protein belongs to the ABC transporter superfamily. ABCF family. EF3 subfamily.

In Mus musculus (Mouse), this protein is ATP-binding cassette sub-family F member 2.